The following is a 319-amino-acid chain: Nucleotide-binding protein Rru_A3448 (319 aa).

The disordered stretch occupies residues 1–34 (MGRSASLLRLRDPAPLPTDIAPDPAEAPPSPAAD). Residue 42 to 49 (GMSGAGRT) coordinates ATP. Residue 90-93 (DTRT) coordinates GTP.

The protein belongs to the RapZ-like family.

Functionally, displays ATPase and GTPase activities. The sequence is that of Nucleotide-binding protein Rru_A3448 from Rhodospirillum rubrum (strain ATCC 11170 / ATH 1.1.1 / DSM 467 / LMG 4362 / NCIMB 8255 / S1).